The sequence spans 164 residues: Protein-export protein SecB (164 aa).

It belongs to the SecB family. In terms of assembly, homotetramer, a dimer of dimers. One homotetramer interacts with 1 SecA dimer.

The protein resides in the cytoplasm. Its function is as follows. One of the proteins required for the normal export of preproteins out of the cell cytoplasm. It is a molecular chaperone that binds to a subset of precursor proteins, maintaining them in a translocation-competent state. It also specifically binds to its receptor SecA. This Stutzerimonas stutzeri (strain A1501) (Pseudomonas stutzeri) protein is Protein-export protein SecB.